A 275-amino-acid polypeptide reads, in one-letter code: Secreted RxLR effector protein 153 (275 aa).

The N-terminal stretch at 1–27 (MRNRAFLFGLFFIEYACLVLFAAPTRA) is a signal peptide. Asn-45 carries an N-linked (GlcNAc...) asparagine glycan. Residues 48-63 (RTLQADDSKRISAEER) carry the RxLR-dEER motif.

Belongs to the RxLR effector family.

It localises to the secreted. It is found in the host cell membrane. Its function is as follows. Secreted effector that completely suppresses the host cell death induced by cell death-inducing proteins. The polypeptide is Secreted RxLR effector protein 153 (Plasmopara viticola (Downy mildew of grapevine)).